The primary structure comprises 119 residues: Ribonuclease P protein component (119 aa).

Belongs to the RnpA family. In terms of assembly, consists of a catalytic RNA component (M1 or rnpB) and a protein subunit.

It catalyses the reaction Endonucleolytic cleavage of RNA, removing 5'-extranucleotides from tRNA precursor.. Functionally, RNaseP catalyzes the removal of the 5'-leader sequence from pre-tRNA to produce the mature 5'-terminus. It can also cleave other RNA substrates such as 4.5S RNA. The protein component plays an auxiliary but essential role in vivo by binding to the 5'-leader sequence and broadening the substrate specificity of the ribozyme. In Aeromonas salmonicida (strain A449), this protein is Ribonuclease P protein component.